The chain runs to 267 residues: 3-oxoadipate enol-lactonase 2 (267 aa).

It carries out the reaction (4,5-dihydro-5-oxofuran-2-yl)-acetate + H2O = 3-oxoadipate + H(+). Its pathway is aromatic compound metabolism; beta-ketoadipate pathway; 3-oxoadipate from 5-oxo-4,5-dihydro-2-furylacetate: step 1/1. This chain is 3-oxoadipate enol-lactonase 2 (catD), found in Acinetobacter baylyi (strain ATCC 33305 / BD413 / ADP1).